The chain runs to 123 residues: MELDGFIYILVGSTFGLIVRMFIKYISGKKKIFYSNNILIVNVLASLFLGIFEGLNITNKNLILFIFVGFLGCFSTFSSFIYQLFNLIREKKYLILLIYYAEVILLSFLFFCLGYFITLTFIN.

Transmembrane regions (helical) follow at residues 3-23 (LDGFIYILVGSTFGLIVRMFI), 38-58 (ILIVNVLASLFLGIFEGLNIT), 62-82 (LILFIFVGFLGCFSTFSSFIY), and 94-114 (LILLIYYAEVILLSFLFFCLG). Residues Gly72 and Ser75 each coordinate Na(+).

This sequence belongs to the fluoride channel Fluc/FEX (TC 1.A.43) family.

Its subcellular location is the cell inner membrane. The catalysed reaction is fluoride(in) = fluoride(out). With respect to regulation, na(+) is not transported, but it plays an essential structural role and its presence is essential for fluoride channel function. Fluoride-specific ion channel. Important for reducing fluoride concentration in the cell, thus reducing its toxicity. This is Fluoride-specific ion channel FluC 2 from Prochlorococcus marinus subsp. pastoris (strain CCMP1986 / NIES-2087 / MED4).